A 287-amino-acid polypeptide reads, in one-letter code: Orotidine 5'-phosphate decarboxylase (287 aa).

K95 acts as the Proton donor in catalysis.

The protein belongs to the OMP decarboxylase family. Type 2 subfamily.

It catalyses the reaction orotidine 5'-phosphate + H(+) = UMP + CO2. The protein operates within pyrimidine metabolism; UMP biosynthesis via de novo pathway; UMP from orotate: step 2/2. The sequence is that of Orotidine 5'-phosphate decarboxylase from Albidiferax ferrireducens (strain ATCC BAA-621 / DSM 15236 / T118) (Rhodoferax ferrireducens).